We begin with the raw amino-acid sequence, 165 residues long: 3-isopropylmalate dehydratase small subunit (165 aa).

This sequence belongs to the LeuD family. LeuD type 2 subfamily. Heterodimer of LeuC and LeuD.

The enzyme catalyses (2R,3S)-3-isopropylmalate = (2S)-2-isopropylmalate. Its pathway is amino-acid biosynthesis; L-leucine biosynthesis; L-leucine from 3-methyl-2-oxobutanoate: step 2/4. Catalyzes the isomerization between 2-isopropylmalate and 3-isopropylmalate, via the formation of 2-isopropylmaleate. The polypeptide is 3-isopropylmalate dehydratase small subunit (Saccharolobus islandicus (strain Y.G.57.14 / Yellowstone #1) (Sulfolobus islandicus)).